The chain runs to 61 residues: MKAFYGMLVIFILCSTCYISVDSQIDTNVKCSGSSKCVKICIDRYNTRGAKCINGRCTCYP.

Residues 1–23 (MKAFYGMLVIFILCSTCYISVDS) form the signal peptide. Residue Gln-24 is modified to Pyrrolidone carboxylic acid. 3 disulfides stabilise this stretch: Cys-31/Cys-52, Cys-37/Cys-57, and Cys-41/Cys-59.

It belongs to the short scorpion toxin superfamily. Potassium channel inhibitor family. Alpha-KTx 15 subfamily. Expressed by the venom gland.

Its subcellular location is the secreted. Irreversibly blocks the A-type voltage-gated potassium channels in rat cerebellum granular cells (190 nM induce 50% inhibitory effect) (IC(50)=190 nM). Also weakly inhibits Kv1.2/KCNA2 and Kv1.3/KCNA3. This Tityus discrepans (Venezuelan scorpion) protein is Potassium channel toxin alpha-KTx 15.6.